A 78-amino-acid polypeptide reads, in one-letter code: MSDIQTLSFEEAMRELEATVGKLETGEATLEDSIALYERGAALRAHCETRLREAEERVEKITLAANGQPSGTEPAEGL.

This sequence belongs to the XseB family. Heterooligomer composed of large and small subunits.

Its subcellular location is the cytoplasm. It carries out the reaction Exonucleolytic cleavage in either 5'- to 3'- or 3'- to 5'-direction to yield nucleoside 5'-phosphates.. Its function is as follows. Bidirectionally degrades single-stranded DNA into large acid-insoluble oligonucleotides, which are then degraded further into small acid-soluble oligonucleotides. This is Exodeoxyribonuclease 7 small subunit from Paracoccus zeaxanthinifaciens.